The following is a 153-amino-acid chain: Putative trans-acting regulator pXO2-62/BXB0076/GBAA_pXO2_0076 (153 aa).

This sequence belongs to the AtxA/AcpA family.

The protein is Putative trans-acting regulator pXO2-62/BXB0076/GBAA_pXO2_0076 of Bacillus anthracis.